The sequence spans 75 residues: Large ribosomal subunit protein uL24c (75 aa).

It belongs to the universal ribosomal protein uL24 family. Part of the 50S ribosomal subunit.

The protein resides in the plastid. It localises to the chloroplast. Functionally, one of two assembly initiator proteins, it binds directly to the 5'-end of the 23S rRNA, where it nucleates assembly of the 50S subunit. This Cyanidioschyzon merolae (strain NIES-3377 / 10D) (Unicellular red alga) protein is Large ribosomal subunit protein uL24c (rpl24).